The chain runs to 839 residues: Oligopeptide transporter phomP2 (839 aa).

A disordered region spans residues 1-58 (MEADPKVPFTDEMNIQDEHNWESGSWSSSRRSNDSNVTLLSRRSSVEQHEDERQKDSD). The span at 23–36 (SGSWSSSRRSNDSN) shows a compositional bias: low complexity. 2 N-linked (GlcNAc...) asparagine glycosylation sites follow: Asn33 and Asn36. Positions 44-58 (SSVEQHEDERQKDSD) are enriched in basic and acidic residues. The next 6 membrane-spanning stretches (helical) occupy residues 105-125 (VWLLSTFWVLAGCSISTVYYF), 177-197 (ALVVIAYWGSSYTAYGLGPLS), 210-230 (PWAITFLVTTQLTGYGLVGLY), 268-288 (VFMAIASAAFVYQWLPSFVFP), 315-335 (GFGLMDFSLDWNYVAFLSPLF), and 345-365 (FVGAALAVWITYPVAYFSDAL). 2 N-linked (GlcNAc...) asparagine glycosylation sites follow: Asn386 and Asn398. 4 consecutive transmembrane segments (helical) span residues 415–435 (AMHFFWGFASASAMVTYAVLF), 478–498 (AWYALLLAVCLCLGTIQLYAG), 505–525 (WGLQLVVAISALFTLPCGMLF), and 585–605 (WELLVAQVYGTLLGPFVNWAV). The segment covering 629–646 (QGLGLGQGGGGGGGGGGQ) has biased composition (gly residues). The interval 629–654 (QGLGLGQGGGGGGGGGGQQQRAAGAH) is disordered. A run of 3 helical transmembrane segments spans residues 665-685 (NFFSSSVIWGVMGPARVFGGG), 697-717 (WLLPSGFAVGAAAVLLLWLIH), and 728-748 (WPLHPAIIFHGASLFPVFPTT). The N-linked (GlcNAc...) asparagine glycan is linked to Asn749. A helical membrane pass occupies residues 781-801 (AGLDCGAQLVQMVLGVAFLVF).

This sequence belongs to the oligopeptide OPT transporter family.

The protein resides in the membrane. In terms of biological role, oligopeptide transporter; part of the gene cluster that mediates the biosynthesis of the phomopsins, a group of hexapeptide mycotoxins which infects lupins and causes lupinosis disease in livestock. This is Oligopeptide transporter phomP2 from Diaporthe leptostromiformis (Lupinosis disease fungus).